Consider the following 61-residue polypeptide: Metallothionein-1A (61 aa).

Methionine 1 is subject to N-acetylmethionine. The beta stretch occupies residues 1 to 29; sequence MDPNCSCPTGGSCSCAGSCTCKACRCTSC. Residues cysteine 5, cysteine 7, cysteine 13, cysteine 15, cysteine 19, cysteine 21, cysteine 24, cysteine 26, cysteine 29, cysteine 33, cysteine 34, cysteine 36, cysteine 37, cysteine 41, cysteine 44, cysteine 48, cysteine 50, and cysteine 57 each coordinate a divalent metal cation. An alpha region spans residues 30-61; the sequence is KKSCCSCCPAGCARCAQGCICKGASDKCSCCA. Serine 58 is subject to Phosphoserine. A divalent metal cation is bound by residues cysteine 59 and cysteine 60.

This sequence belongs to the metallothionein superfamily. Type 1 family. As to quaternary structure, monomer.

Its function is as follows. Metallothioneins have a high content of cysteine residues that bind various heavy metals; these proteins are transcriptionally regulated by both heavy metals and glucocorticoids. In Sus scrofa (Pig), this protein is Metallothionein-1A (MT1A).